We begin with the raw amino-acid sequence, 346 residues long: Tyrosine--tRNA ligase (346 aa).

Y35 contacts L-tyrosine. The 'HIGH' region motif lies at P40–H48. Residues Y162, Q166, D169, and Q184 each contribute to the L-tyrosine site.

The protein belongs to the class-I aminoacyl-tRNA synthetase family. TyrS type 3 subfamily. In terms of assembly, homodimer.

The protein resides in the cytoplasm. It carries out the reaction tRNA(Tyr) + L-tyrosine + ATP = L-tyrosyl-tRNA(Tyr) + AMP + diphosphate + H(+). Functionally, catalyzes the attachment of tyrosine to tRNA(Tyr) in a two-step reaction: tyrosine is first activated by ATP to form Tyr-AMP and then transferred to the acceptor end of tRNA(Tyr). The chain is Tyrosine--tRNA ligase from Haloarcula marismortui (strain ATCC 43049 / DSM 3752 / JCM 8966 / VKM B-1809) (Halobacterium marismortui).